We begin with the raw amino-acid sequence, 312 residues long: 4-hydroxyphenylacetate decarboxylase activating enzyme (312 aa).

Residues 16 to 299 (HDGPGCRTSV…MEHLQQLYLD (284 aa)) enclose the Radical SAM core domain. Cys-30, Cys-34, Cys-37, Cys-56, Cys-62, Cys-65, and Cys-101 together coordinate [4Fe-4S] cluster. Residue 36–38 (WCA) participates in S-adenosyl-L-methionine binding. 2 consecutive 4Fe-4S ferredoxin-type domains span residues 47 to 79 (KHIMVAENVCKWKNGCRSCINACSHDSIKFSED) and 80 to 112 (GKLKISWDTCEKCETFDCVNMCPNNALKQCVKE). Residues Gly-140, 189-191 (DVK), and His-263 contribute to the S-adenosyl-L-methionine site.

This sequence belongs to the organic radical-activating enzymes family. Monomer. [4Fe-4S] cluster is required as a cofactor.

The enzyme catalyses glycyl-[protein] + reduced [flavodoxin] + S-adenosyl-L-methionine = glycin-2-yl radical-[protein] + semiquinone [flavodoxin] + 5'-deoxyadenosine + L-methionine + H(+). Functionally, catalyzes activation of 4-hydroxyphenylacetate decarboxylase under anaerobic conditions by generation of an organic free radical on a glycine residue, via a homolytic cleavage of S-adenosyl-L-methionine (SAM). The polypeptide is 4-hydroxyphenylacetate decarboxylase activating enzyme (Clostridium scatologenes).